The primary structure comprises 254 residues: MNILKRKTPQNIRFGEQKPKYYFHIRAFAVLLGVFFLLGVYFNWQSILEKMDDKPISAFALVGQNTFTTADDIKESLLKMGELKGFWGQDVAPIQEQIEALPWVKGAIVRKMWPNRLSIWVSEYQPVAFWNQNQFVTLDGIVFQLPSVRLTAKNLPYLGGPDYQSLKVIETWNQIYINLKSNNIMAKGINIDDRGAWQVQLDNDIVLKLGRGDWKSKLERFVTIYPQIDVPENKKIDYIDLRYTAGAAVGMVDR.

Residues 1 to 27 (MNILKRKTPQNIRFGEQKPKYYFHIRA) are Cytoplasmic-facing. A helical membrane pass occupies residues 28-48 (FAVLLGVFFLLGVYFNWQSIL). Residues 49 to 254 (EKMDDKPISA…AGAAVGMVDR (206 aa)) lie on the Periplasmic side of the membrane. The POTRA domain occupies 54–124 (KPISAFALVG…NRLSIWVSEY (71 aa)).

This sequence belongs to the FtsQ/DivIB family. FtsQ subfamily. Part of a complex composed of FtsB, FtsL and FtsQ.

The protein resides in the cell inner membrane. Functionally, essential cell division protein. May link together the upstream cell division proteins, which are predominantly cytoplasmic, with the downstream cell division proteins, which are predominantly periplasmic. May control correct divisome assembly. The polypeptide is Cell division protein FtsQ (Haemophilus influenzae (strain ATCC 51907 / DSM 11121 / KW20 / Rd)).